Reading from the N-terminus, the 165-residue chain is SDTLYVLSLPTLVYYYAARNHWPFGTGFCKFVRFLFYWNLYCSVLFLTCISVHRYMGICHPLRALRWGRPRFASLLCLAVWLVVAGCLVPNLFFVTTSPNGTTILCHDTTRPEEFDHYVHFSSAVMVLLFGLPFLVTLVCYGLMARRLYRPLPGAGQSSSRLRSL.

The chain crosses the membrane as a helical span at residues 1–16 (SDTLYVLSLPTLVYYY). Over 17-30 (AARNHWPFGTGFCK) the chain is Extracellular. The chain crosses the membrane as a helical span at residues 31-51 (FVRFLFYWNLYCSVLFLTCIS). The Cytoplasmic segment spans residues 52–74 (VHRYMGICHPLRALRWGRPRFAS). A helical membrane pass occupies residues 75-95 (LLCLAVWLVVAGCLVPNLFFV). The Extracellular portion of the chain corresponds to 96-124 (TTSPNGTTILCHDTTRPEEFDHYVHFSSA). N-linked (GlcNAc...) asparagine glycosylation is present at asparagine 100. The chain crosses the membrane as a helical span at residues 125-145 (VMVLLFGLPFLVTLVCYGLMA). Topologically, residues 146-165 (RRLYRPLPGAGQSSSRLRSL) are cytoplasmic.

It belongs to the G-protein coupled receptor 1 family.

It localises to the cell membrane. Functionally, receptor for UTP and UDP coupled to G-proteins that activate a phosphatidylinositol-calcium second messenger system. This Cricetulus griseus (Chinese hamster) protein is P2Y purinoceptor 4 (P2RY4).